The sequence spans 78 residues: Neurogranin (78 aa).

Met1 is subject to N-acetylmethionine. Residues 26-49 (ANAAAAKIQASFRGHMARKKIKSG) enclose the IQ domain. Ser36 carries the phosphoserine; by PHK and PKC modification. The segment at 38–78 (RGHMARKKIKSGERGRKGPGPGGPGGAGGARGGAGGGPSGD) is disordered. One can recognise a Collagen-like domain in the interval 50 to 78 (ERGRKGPGPGGPGGAGGARGGAGGGPSGD). The span at 55–78 (GPGPGGPGGAGGARGGAGGGPSGD) shows a compositional bias: gly residues. A Citrulline; partial modification is found at Arg68. At Arg68 the chain carries Omega-N-methylarginine.

The protein belongs to the neurogranin family. In terms of processing, the N-terminus is blocked. Post-translationally, phosphorylated at Ser-36 by PHK and PKC. Phosphorylation prevents interaction with Calmodulin and interrupts several learning- and memory-associated functions. As to expression, is highly enriched in brain. Accumulates postsynaptically in dendritic spines of neostriatal neurons.

Acts as a 'third messenger' substrate of protein kinase C-mediated molecular cascades during synaptic development and remodeling. Binds to calmodulin in the absence of calcium. This is Neurogranin (NRGN) from Bos taurus (Bovine).